The sequence spans 548 residues: Membrane protein insertase YidC (548 aa).

A helical membrane pass occupies residues 6 to 26; that stretch reads NLLIIALLFVSFMIWQAWEQD. Positions 28-52 are disordered; the sequence is NPQPQQQTTQTTTTAAGSAADQGVP. Positions 29-41 are enriched in low complexity; that stretch reads PQPQQQTTQTTTT. Transmembrane regions (helical) follow at residues 345–365, 420–440, 458–478, and 499–519; these read KFIHSFLGNWGFSIIVITFIV, LGGCFPLIIQMPIFLALYYML, LSAQDPYYILPIIMGATMFFI, and PVIFTVFFLWFPSGLVVYYIV.

Belongs to the OXA1/ALB3/YidC family. Type 1 subfamily. Interacts with the Sec translocase complex via SecD. Specifically interacts with transmembrane segments of nascent integral membrane proteins during membrane integration.

The protein resides in the cell inner membrane. In terms of biological role, required for the insertion and/or proper folding and/or complex formation of integral membrane proteins into the membrane. Involved in integration of membrane proteins that insert both dependently and independently of the Sec translocase complex, as well as at least some lipoproteins. Aids folding of multispanning membrane proteins. This chain is Membrane protein insertase YidC, found in Klebsiella pneumoniae subsp. pneumoniae (strain ATCC 700721 / MGH 78578).